The primary structure comprises 424 residues: Subtilisin-like protease 2 (424 aa).

Positions 1 to 17 (MQLLNLGLLLLLPFVAG) are cleaved as a signal peptide. The propeptide occupies 18–123 (EIAPQPEPLR…VHPDQHVYLA (106 aa)). An Inhibitor I9 domain is found at 37–123 (QYIVTLKEGL…VHPDQHVYLA (87 aa)). The Peptidase S8 domain maps to 132–424 (RWGLGYMSSK…RKFTLPKNTK (293 aa)). Residues aspartate 170 and histidine 202 each act as charge relay system in the active site. N-linked (GlcNAc...) asparagine glycosylation is found at asparagine 249, asparagine 262, and asparagine 350. The active-site Charge relay system is the serine 359. Asparagine 390 carries N-linked (GlcNAc...) asparagine glycosylation.

The protein belongs to the peptidase S8 family.

It localises to the secreted. Its function is as follows. Secreted subtilisin-like serine protease with keratinolytic activity that contributes to pathogenicity. In Arthroderma otae (Microsporum canis), this protein is Subtilisin-like protease 2 (SUB2).